The sequence spans 3172 residues: Erythronolide synthase EryA3 (3172 aa).

Positions 38-452 (GEPIAIVGMA…GTNAHVIVEE (415 aa)) constitute a Ketosynthase family 3 (KS3) 1 domain. Module stretches follow at residues 41-1464 (IAIV…DHYL) and 1492-2891 (IAIV…DHIG). Cysteine 199 serves as the catalytic Acyl-thioester intermediate; for beta-ketoacyl synthase 1 activity. Active-site for beta-ketoacyl synthase 1 activity residues include histidine 334 and histidine 374. Residues 557–874 (VFPGQGAQWQ…LGEAYAQGVE (318 aa)) are acyltransferase 1. Serine 643 (acyl-ester intermediate; for acyltransferase 1 activity) is an active-site residue. The tract at residues 1117-1294 (GTVLVTGGTG…VTSIAWGLWA (178 aa)) is beta-ketoacyl reductase 1. NADP(+)-binding positions include 1125-1128 (TGGI), 1148-1151 (GRRG), 1177-1178 (DV), lysine 1229, and 1249-1250 (FS). Tyrosine 1264 functions as the Acyl-ester intermediate; for beta-ketoacyl reductase 1 activity in the catalytic mechanism. The Carrier 1 domain maps to 1392–1467 (EHLAHLIRAE…RLADHYLERL (76 aa)). An O-(pantetheine 4'-phosphoryl)serine modification is found at serine 1427. Residues 1489–1916 (DDPIAIVGMA…GTNAHVIIAE (428 aa)) enclose the Ketosynthase family 3 (KS3) 2 domain. Residue cysteine 1661 is the Acyl-thioester intermediate; for beta-ketoacyl synthase 2 activity of the active site. Catalysis depends on for beta-ketoacyl synthase 2 activity residues histidine 1797 and histidine 1837. Positions 2022-2331 (VFVFPGQGAQ…LARAHVHGVA (310 aa)) are acyltransferase 2. Serine 2112 functions as the Acyl-ester intermediate; for acyltransferase 2 activity in the catalytic mechanism. The segment at 2557-2731 (GTALVTGGTG…ATSVAWGAWA (175 aa)) is beta-ketoacyl reductase 2. NADP(+) contacts are provided by residues 2565-2568 (TGAL), 2588-2591 (SRRG), 2617-2618 (DV), lysine 2666, and 2686-2687 (FS). Tyrosine 2701 functions as the Acyl-ester intermediate; for beta-ketoacyl reductase 2 activity in the catalytic mechanism. The Carrier 2 domain occupies 2819–2894 (QELLEFTHSH…RLADHIGQQL (76 aa)). Serine 2854 carries the O-(pantetheine 4'-phosphoryl)serine modification. Positions 2960–3166 (ICCAGTAAIS…DAIARHIDAW (207 aa)) are thioesterase. Threonine 2965 serves as a coordination point for substrate. The active-site Nucleophile; for thioesterase activity is serine 3031. Positions 3032 and 3058 each coordinate substrate. Histidine 3148 (proton acceptor; for thioesterase activity) is an active-site residue.

As to quaternary structure, homodimer. Erythronolide synthase is composed of EryAI, EryAII and EryAIII multimodular (2 modules) polypeptides each coding for a functional synthase subunit which participates in 2 of the six FAS-like elongation steps required for formation of the polyketide. Module 1, 2, 3, 4, 5, and 6 participating in biosynthesis steps 1, 2, 3, 4, 5, and 6, respectively. Pantetheine 4'-phosphate serves as cofactor.

It catalyses the reaction 6 (S)-methylmalonyl-CoA + propanoyl-CoA + 6 NADPH + 12 H(+) = 6-deoxyerythronolide B + 6 CO2 + 6 NADP(+) + 7 CoA + H2O. Its pathway is antibiotic biosynthesis; erythromycin biosynthesis. Its activity is regulated as follows. Inhibited by diphenyl phosphonates derivatives such as diphenyl allylphosphonate. Functionally, involved in the biosynthesis of antibiotic erythromycin via the biosynthesis of its aglycone precursor, 6-deoxyerythronolide B (6-dEB). The polypeptide is Erythronolide synthase EryA3 (Saccharopolyspora erythraea (Streptomyces erythraeus)).